Consider the following 551-residue polypeptide: Hydroxymethylpyrimidine/phosphomethylpyrimidine kinase THI21 (551 aa).

Gln64 serves as a coordination point for 4-amino-5-hydroxymethyl-2-methylpyrimidine.

It in the N-terminal section; belongs to the ThiD family. This sequence in the C-terminal section; belongs to the thiaminase-2 family.

The enzyme catalyses 4-amino-5-hydroxymethyl-2-methylpyrimidine + ATP = 4-amino-2-methyl-5-(phosphooxymethyl)pyrimidine + ADP + H(+). It catalyses the reaction 4-amino-2-methyl-5-(phosphooxymethyl)pyrimidine + ATP = 4-amino-2-methyl-5-(diphosphooxymethyl)pyrimidine + ADP. Its pathway is cofactor biosynthesis; thiamine diphosphate biosynthesis; 4-amino-2-methyl-5-diphosphomethylpyrimidine from 5-amino-1-(5-phospho-D-ribosyl)imidazole: step 2/3. It participates in cofactor biosynthesis; thiamine diphosphate biosynthesis; 4-amino-2-methyl-5-diphosphomethylpyrimidine from 5-amino-1-(5-phospho-D-ribosyl)imidazole: step 3/3. In terms of biological role, catalyzes the phosphorylation of hydroxymethylpyrimidine phosphate (HMP-P) to HMP-PP, and also probably that of HMP to HMP-P. This is Hydroxymethylpyrimidine/phosphomethylpyrimidine kinase THI21 (THI21) from Saccharomyces cerevisiae (strain ATCC 204508 / S288c) (Baker's yeast).